The sequence spans 609 residues: mRNA cap guanine-N(7) methyltransferase (609 aa).

The segment covering 1 to 10 has biased composition (basic and acidic residues); that stretch reads MASKEEERTG. Residues 1–252 are disordered; the sequence is MASKEEERTG…EEDAMRNSQS (252 aa). Composition is skewed to low complexity over residues 28–47 and 70–87; these read QPVV…ATPT and PQTT…QQKQ. The segment covering 148 to 163 has biased composition (basic and acidic residues); sequence ANDRPISKRKRLEERH. Residues 193-205 are compositionally biased toward pro residues; it reads PRSPSPPLPPRSP. Residues 233–247 are compositionally biased toward basic and acidic residues; the sequence is RRQEERERALEEDAM. Residues 278–590 enclose the mRNA cap 0 methyltransferase domain; sequence SKIKGLRSFN…KYTPLGFTSA (313 aa). 287–288 lines the mRNA pocket; sequence NN. Residues K291, G314, D338, D379, 422–424, and Y427 each bind S-adenosyl-L-methionine; that span reads MFA.

It belongs to the class I-like SAM-binding methyltransferase superfamily. mRNA cap 0 methyltransferase family.

It is found in the nucleus. The enzyme catalyses a 5'-end (5'-triphosphoguanosine)-ribonucleoside in mRNA + S-adenosyl-L-methionine = a 5'-end (N(7)-methyl 5'-triphosphoguanosine)-ribonucleoside in mRNA + S-adenosyl-L-homocysteine. Its function is as follows. Responsible for methylating the 5'-cap structure of mRNAs. The sequence is that of mRNA cap guanine-N(7) methyltransferase (abd1) from Aspergillus niger (strain ATCC MYA-4892 / CBS 513.88 / FGSC A1513).